The chain runs to 148 residues: Probable glycine cleavage system H protein 2 (148 aa).

The 83-residue stretch at 32–114 (TIVVGITDLA…YGKGWLVKMK (83 aa)) folds into the Lipoyl-binding domain. Lys73 bears the N6-lipoyllysine mark.

The protein belongs to the GcvH family. As to quaternary structure, the glycine cleavage system is composed of four proteins: P, T, L and H. (R)-lipoate is required as a cofactor.

Functionally, the glycine cleavage system catalyzes the degradation of glycine. The H protein shuttles the methylamine group of glycine from the P protein to the T protein. This is Probable glycine cleavage system H protein 2 from Saccharolobus solfataricus (strain ATCC 35092 / DSM 1617 / JCM 11322 / P2) (Sulfolobus solfataricus).